The primary structure comprises 528 residues: Ladinin-1 (528 aa).

Positions 1 to 404 (MSVSRKDWSA…NSETPLTRSA (404 aa)) are disordered. A phosphoserine mark is found at Ser38, Ser56, Ser62, Ser72, and Ser76. Over residues 88-97 (RTRKERRQRR) the composition is skewed to basic residues. A Phosphoserine modification is found at Ser119. The segment covering 134–173 (KKVEALPRRRLSREQRGPWAQDEERLKNRELAEGEKRLPE) has biased composition (basic and acidic residues). SEK repeat units follow at residues 184–186 (SEK), 190–192 (SEK), 202–204 (SEK), and 208–210 (SEK). Residues 184–281 (SEKTPVSEKT…MQERKLVSEK (98 aa)) form a 6 X SEK repeats region. Basic and acidic residues-rich tracts occupy residues 218-231 (SLTEKRHSPEKLVP) and 267-279 (IVSEKMQERKLVS). SEK repeat units follow at residues 269–271 (SEK) and 279–281 (SEK). The segment covering 304 to 316 (EQPQTTGGSQATT) has biased composition (polar residues). A phosphoserine mark is found at Ser328, Ser358, Ser367, Ser405, and Ser496. Residues 365-377 (TPSPTLLTYSSSL) are compositionally biased toward low complexity. The segment at 492 to 528 (KTQDSGDHGSQEVRKEASVTKRAQWGSKPSTSLDAEV) is disordered. Basic and acidic residues predominate over residues 495–510 (DSGDHGSQEVRKEASV). Over residues 518–528 (SKPSTSLDAEV) the composition is skewed to polar residues.

In terms of tissue distribution, expressed in kidney, lung and keratinocytes followed by liver, spleen and brain. Not expressed in testis, skeletal and heart muscle and in fibroblasts.

It localises to the secreted. The protein localises to the extracellular space. It is found in the extracellular matrix. The protein resides in the basement membrane. Its function is as follows. Anchoring filament protein which is a component of the basement membrane zone. This is Ladinin-1 (Lad1) from Mus musculus (Mouse).